The following is a 112-amino-acid chain: uncharacterized protein (112 aa).

The next 3 membrane-spanning stretches (helical) occupy residues 33–53 (PSPL…PFGA), 58–78 (LYIY…NVCT), and 91–111 (CVYV…LLFV).

It is found in the membrane. This is an uncharacterized protein from Saccharomyces cerevisiae (strain ATCC 204508 / S288c) (Baker's yeast).